A 158-amino-acid polypeptide reads, in one-letter code: ATP synthase subunit b' (158 aa).

Residues 24 to 44 (ATLPLMAVQILVLVFLLNAVF) traverse the membrane as a helical segment.

Belongs to the ATPase B chain family. As to quaternary structure, F-type ATPases have 2 components, F(1) - the catalytic core - and F(0) - the membrane proton channel. F(1) has five subunits: alpha(3), beta(3), gamma(1), delta(1), epsilon(1). F(0) has four main subunits: a(1), b(1), b'(1) and c(10-14). The alpha and beta chains form an alternating ring which encloses part of the gamma chain. F(1) is attached to F(0) by a central stalk formed by the gamma and epsilon chains, while a peripheral stalk is formed by the delta, b and b' chains.

It is found in the cellular thylakoid membrane. Its function is as follows. F(1)F(0) ATP synthase produces ATP from ADP in the presence of a proton or sodium gradient. F-type ATPases consist of two structural domains, F(1) containing the extramembraneous catalytic core and F(0) containing the membrane proton channel, linked together by a central stalk and a peripheral stalk. During catalysis, ATP synthesis in the catalytic domain of F(1) is coupled via a rotary mechanism of the central stalk subunits to proton translocation. Component of the F(0) channel, it forms part of the peripheral stalk, linking F(1) to F(0). The b'-subunit is a diverged and duplicated form of b found in plants and photosynthetic bacteria. The protein is ATP synthase subunit b' of Synechococcus elongatus (strain ATCC 33912 / PCC 7942 / FACHB-805) (Anacystis nidulans R2).